The chain runs to 345 residues: 2-oxoglutarate-dependent ethylene/succinate-forming enzyme (345 aa).

In terms of domain architecture, Fe2OG dioxygenase spans 167 to 288 (GWHHMRVLRF…RFAMAYFHEP (122 aa)). Fe cation contacts are provided by His-191 and His-270.

The protein belongs to the iron/ascorbate-dependent oxidoreductase family. Monomer. The cofactor is Fe(2+).

The enzyme catalyses 2-oxoglutarate + O2 + 2 H(+) = ethene + 3 CO2 + H2O. The catalysed reaction is L-arginine + 2-oxoglutarate + O2 = guanidine + L-glutamate 5-semialdehyde + succinate + CO2. The protein operates within alkene biosynthesis; ethylene biosynthesis via 2-oxoglutarate. Functionally, simultaneously catalyzes two reactions, namely formation of ethylene and of succinate from 2-oxoglutarate. The chain is 2-oxoglutarate-dependent ethylene/succinate-forming enzyme (efe) from Ralstonia nicotianae (strain ATCC BAA-1114 / GMI1000) (Ralstonia solanacearum).